The primary structure comprises 510 residues: Chromosomal replication initiator protein DnaA (510 aa).

The tract at residues methionine 1–aspartate 107 is domain I, interacts with DnaA modulators. Positions aspartate 107–threonine 169 are domain II. The segment at proline 119–glycine 168 is disordered. A domain III, AAA+ region region spans residues serine 170–alanine 386. ATP contacts are provided by glycine 214, glycine 216, lysine 217, and threonine 218. The interval serine 387–arginine 510 is domain IV, binds dsDNA.

The protein belongs to the DnaA family. In terms of assembly, oligomerizes as a right-handed, spiral filament on DNA at oriC.

It is found in the cytoplasm. In terms of biological role, plays an essential role in the initiation and regulation of chromosomal replication. ATP-DnaA binds to the origin of replication (oriC) to initiate formation of the DNA replication initiation complex once per cell cycle. Binds the DnaA box (a 9 base pair repeat at the origin) and separates the double-stranded (ds)DNA. Forms a right-handed helical filament on oriC DNA; dsDNA binds to the exterior of the filament while single-stranded (ss)DNA is stabiized in the filament's interior. The ATP-DnaA-oriC complex binds and stabilizes one strand of the AT-rich DNA unwinding element (DUE), permitting loading of DNA polymerase. After initiation quickly degrades to an ADP-DnaA complex that is not apt for DNA replication. Binds acidic phospholipids. This Mycobacterium ulcerans (strain Agy99) protein is Chromosomal replication initiator protein DnaA.